We begin with the raw amino-acid sequence, 344 residues long: Centromere protein L (344 aa).

Phosphoserine is present on S39. T43 is subject to Phosphothreonine. A Phosphoserine modification is found at S53.

This sequence belongs to the CENP-L/IML3 family. In terms of assembly, component of the CENPA-CAD complex, composed of CENPI, CENPK, CENPL, CENPO, CENPP, CENPQ, CENPR and CENPS. The CENPA-CAD complex interacts with the CENPA-NAC complex, at least composed of CENPA, CENPC, CENPH, CENPM, CENPN, CENPT and CENPU.

It is found in the nucleus. The protein resides in the chromosome. It localises to the centromere. Its function is as follows. Component of the CENPA-CAD (nucleosome distal) complex, a complex recruited to centromeres which is involved in assembly of kinetochore proteins, mitotic progression and chromosome segregation. May be involved in incorporation of newly synthesized CENPA into centromeres via its interaction with the CENPA-NAC complex. The protein is Centromere protein L (CENPL) of Homo sapiens (Human).